A 200-amino-acid chain; its full sequence is Large ribosomal subunit protein uL4 (200 aa).

The interval 38 to 72 (GRQGTKQQKTRSDVAGGGKRPWRQKGTGRARAGTT) is disordered.

Belongs to the universal ribosomal protein uL4 family. In terms of assembly, part of the 50S ribosomal subunit.

In terms of biological role, one of the primary rRNA binding proteins, this protein initially binds near the 5'-end of the 23S rRNA. It is important during the early stages of 50S assembly. It makes multiple contacts with different domains of the 23S rRNA in the assembled 50S subunit and ribosome. Functionally, forms part of the polypeptide exit tunnel. This chain is Large ribosomal subunit protein uL4, found in Pseudomonas putida (strain ATCC 700007 / DSM 6899 / JCM 31910 / BCRC 17059 / LMG 24140 / F1).